A 358-amino-acid chain; its full sequence is Uroporphyrinogen decarboxylase (358 aa).

Substrate-binding positions include Arg-29 to Arg-33, Phe-48, Asp-79, Tyr-155, Ser-210, and His-330.

This sequence belongs to the uroporphyrinogen decarboxylase family. As to quaternary structure, homodimer.

The protein localises to the cytoplasm. It catalyses the reaction uroporphyrinogen III + 4 H(+) = coproporphyrinogen III + 4 CO2. The protein operates within porphyrin-containing compound metabolism; protoporphyrin-IX biosynthesis; coproporphyrinogen-III from 5-aminolevulinate: step 4/4. Catalyzes the decarboxylation of four acetate groups of uroporphyrinogen-III to yield coproporphyrinogen-III. The sequence is that of Uroporphyrinogen decarboxylase from Bordetella pertussis (strain Tohama I / ATCC BAA-589 / NCTC 13251).